We begin with the raw amino-acid sequence, 142 residues long: Universal stress protein G (142 aa).

It belongs to the universal stress protein A family.

The polypeptide is Universal stress protein G (uspG) (Shigella flexneri).